Consider the following 199-residue polypeptide: Twist-related protein 1 (199 aa).

Over residues 1–18 the composition is skewed to low complexity; that stretch reads MMQDVSSSPVSPADDSLS. Residues 1 to 102 form a disordered region; the sequence is MMQDVSSSPV…GGGSPQSYEE (102 aa). Over residues 34–43 the composition is skewed to basic residues; the sequence is RGGRKRRSSR. Composition is skewed to gly residues over residues 46-65 and 80-96; these read AGGGAGPGGAAGGGVGGGDE and GCGGGAGGGGSSSGGGS. Residues 105–156 form the bHLH domain; it reads TQRVMANVRERQRTQSLNEAFAALRKIIPTLPSDKLSKIQTLKLAARYIDFL. Positions 158-188 are sufficient for transactivation activity; sequence QVLQSDELDSKMASCSYVAHERLSYAFSVWR.

As to quaternary structure, efficient DNA binding requires dimerization with another bHLH protein. Homodimer or heterodimer with E proteins such as TCF3. ID1 binds preferentially to TCF3 but does not interact efficiently with TWIST1 so ID1 levels control the amount of TCF3 available to dimerize with TWIST and thus determine the type of dimer formed.

The protein localises to the nucleus. Acts as a transcriptional regulator. Inhibits myogenesis by sequestrating E proteins, inhibiting trans-activation by MEF2, and inhibiting DNA-binding by MYOD1 through physical interaction. This interaction probably involves the basic domains of both proteins. Also represses expression of pro-inflammatory cytokines such as TNFA and IL1B. Regulates cranial suture patterning and fusion. Activates transcription as a heterodimer with E proteins. Regulates gene expression differentially, depending on dimer composition. Homodimers induce expression of FGFR2 and POSTN while heterodimers repress FGFR2 and POSTN expression and induce THBS1 expression. Heterodimerization is also required for osteoblast differentiation. Represses the activity of the circadian transcriptional activator: NPAS2-BMAL1 heterodimer. In Microcebus murinus (Gray mouse lemur), this protein is Twist-related protein 1 (TWIST1).